We begin with the raw amino-acid sequence, 1413 residues long: ABC-type transporter vrcC (1413 aa).

The region spanning Val108–Glu365 is the ABC transporter 1 domain. Asn289 is a glycosylation site (N-linked (GlcNAc...) asparagine). The chain crosses the membrane as a helical span at residues Val476–Tyr496. Asn501 carries an N-linked (GlcNAc...) asparagine glycan. Helical transmembrane passes span Ala510–Leu530 and Val564–Gly584. A glycan (N-linked (GlcNAc...) asparagine) is linked at Asn675. The helical transmembrane segment at Ile683–Phe703 threads the bilayer. A disordered region spans residues Ser725 to Arg748. A glycan (N-linked (GlcNAc...) asparagine) is linked at Asn738. A compositionally biased stretch (basic and acidic residues) spans Ala739 to Arg748. The 243-residue stretch at Phe761–Gly1003 folds into the ABC transporter 2 domain. Helical transmembrane passes span Ile1105–Leu1125, Ile1142–Thr1162, Leu1191–Met1211, Leu1230–Leu1250, Leu1266–Phe1286, and Val1290–Val1310. Asn1324 is a glycosylation site (N-linked (GlcNAc...) asparagine). A helical transmembrane segment spans residues Phe1378–Trp1398.

It belongs to the ABC transporter superfamily. ABCG family. PDR (TC 3.A.1.205) subfamily.

It is found in the cell membrane. ABC-type transporter; part of the gene cluster that mediates the biosynthesis of the sesterterpene variecolin. VrcC is probably involved in the secretion of variecolin. The chain is ABC-type transporter vrcC from Aspergillus aculeatus (strain ATCC 16872 / CBS 172.66 / WB 5094).